The following is a 238-amino-acid chain: MVKLMEVYEGKAKKMIPIDDDKLIMEFKDDATAFDGTKKARFKGKGWLNAQLSVIFFKLLEEHGIKTHFIGVAGGNRLIVEKLDMYPLEVVVRNVVAGSLKKRLPLPEGYELPEPIVELYYKNDELHDPMINYYHAKVLGISLDEIKKIEEIALKVNEILKDYLAKKGIILVDFKLEFGKDKNGDIVLADEISPDTCRFWDAKTKRSLDKDVFRFDKGDLIEAYKEIYERITGEKPEF.

Belongs to the SAICAR synthetase family.

It carries out the reaction 5-amino-1-(5-phospho-D-ribosyl)imidazole-4-carboxylate + L-aspartate + ATP = (2S)-2-[5-amino-1-(5-phospho-beta-D-ribosyl)imidazole-4-carboxamido]succinate + ADP + phosphate + 2 H(+). It participates in purine metabolism; IMP biosynthesis via de novo pathway; 5-amino-1-(5-phospho-D-ribosyl)imidazole-4-carboxamide from 5-amino-1-(5-phospho-D-ribosyl)imidazole-4-carboxylate: step 1/2. The sequence is that of Phosphoribosylaminoimidazole-succinocarboxamide synthase (purC) from Pyrococcus horikoshii (strain ATCC 700860 / DSM 12428 / JCM 9974 / NBRC 100139 / OT-3).